The sequence spans 200 residues: UPF0316 protein SACOL1973 (200 aa).

Helical transmembrane passes span 8–28, 40–60, and 66–86; these read PWLM…FLTM, IAAS…GLVM, and IQNI…GMKI.

It belongs to the UPF0316 family.

The protein resides in the cell membrane. In Staphylococcus aureus (strain COL), this protein is UPF0316 protein SACOL1973.